A 274-amino-acid polypeptide reads, in one-letter code: Large ribosomal subunit protein uL2 (274 aa).

Disordered regions lie at residues 37–59 (KAKN…GGHK) and 222–262 (GAAM…RTNK). Basic residues predominate over residues 50-59 (TTRHKGGGHK).

Belongs to the universal ribosomal protein uL2 family. In terms of assembly, part of the 50S ribosomal subunit. Forms a bridge to the 30S subunit in the 70S ribosome.

One of the primary rRNA binding proteins. Required for association of the 30S and 50S subunits to form the 70S ribosome, for tRNA binding and peptide bond formation. It has been suggested to have peptidyltransferase activity; this is somewhat controversial. Makes several contacts with the 16S rRNA in the 70S ribosome. The chain is Large ribosomal subunit protein uL2 from Alcanivorax borkumensis (strain ATCC 700651 / DSM 11573 / NCIMB 13689 / SK2).